Here is a 720-residue protein sequence, read N- to C-terminus: MPRDYQAEKEKCKTFLQEFYKDDEFGKKNFKYGVQLANIAHREQVALCIDLDDLAEEDPELVDAICENTRRYTNLFADAVQELLPQYKEREVVHKDALDVYIEHRLMMEQRGRDPNEMRDPHNQYPPELMRRFELYFKAPSSSKARVVRDVKADSIGKLVTVRGIVTRVTEVKPMMVVATYTCDQCGAETYQPIQSPTFMPLIMCPSRECQTNRSGGRLYLQTRGSKFIKFQELKIQEHSDQVPVGNIPRCMSVYVRGENTRLAQPGDHVGITGVFLPMLRTGFRQVVQGLLSETYLESHRLVKMNKTEDDELGTEELSEEELRQITEEDFYEKLAASIAPEIYGHEDVKKALLLLLVGGVDHSPRGMKIRGNINVCLMGDPGVAKSQLLSYIDRLAPRSQYTTGRGSSGVGLTAAVMKDPVTGEMTLEGGALVLADQGVCCIDEFDKMMDSDRTAIHEVMEQQTISIAKAGIMTTLNARCSILAAANPAYGRYNPKKTVEQNIQLPAALLSRFDLLWLIQDKPDRDNDLRLAQHITYVHQHSKQPPSQFQPMDMKLMRRYITMCKSKQPAIPESLADYLTAAYVEMRKEARTNKDMTFTSARTLLSILRLSTALARLRLEDVVEKEDVNEAMRLTEMSKDSLQGDKGHASRTQRPADVIFSTIREMVPEKGARSVKYSEAEQRCVSKGFTPAQFEAALEEYEELNVWLVNQARTKITFV.

The C4-type zinc-finger motif lies at 183–210 (CDQCGAETYQPIQSPTFMPLIMCPSREC). An MCM domain is found at 331–537 (FYEKLAASIA…NDLRLAQHIT (207 aa)). ATP is bound by residues tyrosine 344, glycine 383, alanine 385, lysine 386, serine 387, asparagine 488, arginine 513, and arginine 603. The Arginine finger motif lies at 512-515 (SRFD).

This sequence belongs to the MCM family. As to quaternary structure, component of the mcm2-7 complex (RLF-M). The complex forms a toroidal hexameric ring with the proposed subunit order mcm2-mcm6-mcm4-mcm7-mcm3-mcm5. The heterodimer of mmcm3/mcm5 interacts with mcm4, mmcm6, mcm7 and weakly with mcm2. The N-terminus is required for interaction with mmcm3, though this interaction may not be direct, and remains in a complex with mmcm3 throughout the cell cycle. Begins to associate with zmcm6 at the neurula stage. Component of the replisome complex. Component of the CMG helicase complex, composed of the mcm2-7 complex, the GINS complex and cdc45. In terms of processing, ubiquitinated by traip when forks converge following formation of DNA interstrand cross-links. Short ubiquitin chains on mcm7 promote recruitment of DNA glycosylase neil3. If the interstrand cross-link cannot be cleaved by neil3, the ubiquitin chains continue to grow on mcm7, promoting the unloading of the CMG helicase complex by the vcp/p97 ATPase.

The protein localises to the nucleus. It localises to the chromosome. The enzyme catalyses ATP + H2O = ADP + phosphate + H(+). In terms of biological role, acts as a component of the mcm2-7 complex (mcm complex) which is the putative replicative helicase essential for 'once per cell cycle' DNA replication initiation and elongation in eukaryotic cells. The active ATPase sites in the mcm2-7 ring are formed through the interaction surfaces of two neighboring subunits such that a critical structure of a conserved arginine finger motif is provided in trans relative to the ATP-binding site of the Walker A box of the adjacent subunit. The six ATPase active sites, however, are likely to contribute differentially to the complex helicase activity. The existence of maternal and zygotic forms of mcm3 and mcm6 suggests that specific forms of mcm2-7 complexes may be used during different stages of development. The polypeptide is DNA replication licensing factor mcm7-B (mcm7-b) (Xenopus laevis (African clawed frog)).